The chain runs to 213 residues: Putative protein Brevis radix-like 3 (213 aa).

Positions 7 to 27 are disordered; that stretch reads CSSKEGGEDGSRGAATPHGRD. One can recognise a BRX domain in the interval 158 to 213; sequence REWTAQVEPGVQITFVTLPGGGNDLKRIRFSRERFGEDRAKVWWEHNRDRIQAQYL.

The protein belongs to the BRX family.

The protein localises to the nucleus. This chain is Putative protein Brevis radix-like 3 (BRXL3), found in Oryza sativa subsp. japonica (Rice).